We begin with the raw amino-acid sequence, 221 residues long: Large ribosomal subunit protein uL3 (221 aa).

It belongs to the universal ribosomal protein uL3 family. As to quaternary structure, part of the 50S ribosomal subunit. Forms a cluster with proteins L14 and L19.

One of the primary rRNA binding proteins, it binds directly near the 3'-end of the 23S rRNA, where it nucleates assembly of the 50S subunit. The polypeptide is Large ribosomal subunit protein uL3 (Chlamydia trachomatis serovar L2 (strain ATCC VR-902B / DSM 19102 / 434/Bu)).